A 285-amino-acid polypeptide reads, in one-letter code: Bifunctional protein FolD (285 aa).

Residues 166–168 (GAS) and Ile-232 contribute to the NADP(+) site.

It belongs to the tetrahydrofolate dehydrogenase/cyclohydrolase family. In terms of assembly, homodimer.

The enzyme catalyses (6R)-5,10-methylene-5,6,7,8-tetrahydrofolate + NADP(+) = (6R)-5,10-methenyltetrahydrofolate + NADPH. The catalysed reaction is (6R)-5,10-methenyltetrahydrofolate + H2O = (6R)-10-formyltetrahydrofolate + H(+). It participates in one-carbon metabolism; tetrahydrofolate interconversion. Catalyzes the oxidation of 5,10-methylenetetrahydrofolate to 5,10-methenyltetrahydrofolate and then the hydrolysis of 5,10-methenyltetrahydrofolate to 10-formyltetrahydrofolate. The sequence is that of Bifunctional protein FolD from Baumannia cicadellinicola subsp. Homalodisca coagulata.